A 562-amino-acid polypeptide reads, in one-letter code: 2-hydroxyisobutanoyl-CoA mutase large subunit (562 aa).

(3S)-3-hydroxybutanoyl-CoA is bound by residues 76 to 79 (YPTM), 86 to 88 (TMR), D117, 196 to 198 (TVQ), R235, N240, H245, and R284.

It belongs to the acyl-CoA mutase large subunit family. Homotetramer composed of two large substrate-binding subunits (HcmA) and two small cobalamin-binding subunits (HcmB).

It catalyses the reaction 2-hydroxyisobutanoyl-CoA = (3S)-3-hydroxybutanoyl-CoA. Together with HcmB, catalyzes the isomerization of 2-hydroxyisobutyryl-CoA and 3-hydroxybutyryl-CoA. Is specific for 2-hydroxyisobutyryl-CoA and (S)-3-hydroxybutyryl-CoA, and shows only very low activity with (R)-3-hydroxybutyryl-CoA, isobutyryl-CoA and butyryl-CoA. In vitro, can isomerize pivalyl-CoA and isovaleryl-CoA, with much lower efficiency. Plays a central role in the degradation of substrates bearing a tert-butyl moiety, such as the fuel oxygenate methyl tert-butyl ether (MTBE) and its metabolites. This chain is 2-hydroxyisobutanoyl-CoA mutase large subunit, found in Aquincola tertiaricarbonis.